Here is a 37-residue protein sequence, read N- to C-terminus: Large ribosomal subunit protein bL36 (37 aa).

This sequence belongs to the bacterial ribosomal protein bL36 family.

In Moorella thermoacetica (strain ATCC 39073 / JCM 9320), this protein is Large ribosomal subunit protein bL36.